Reading from the N-terminus, the 232-residue chain is 5'-methylthioadenosine/S-adenosylhomocysteine nucleosidase (232 aa).

Catalysis depends on glutamate 12, which acts as the Proton acceptor. Residues glycine 78, valine 153, and 174–175 each bind substrate; that span reads ME. The active-site Proton donor is aspartate 198.

The protein belongs to the PNP/UDP phosphorylase family. MtnN subfamily.

It carries out the reaction S-adenosyl-L-homocysteine + H2O = S-(5-deoxy-D-ribos-5-yl)-L-homocysteine + adenine. It catalyses the reaction S-methyl-5'-thioadenosine + H2O = 5-(methylsulfanyl)-D-ribose + adenine. The catalysed reaction is 5'-deoxyadenosine + H2O = 5-deoxy-D-ribose + adenine. It functions in the pathway amino-acid biosynthesis; L-methionine biosynthesis via salvage pathway; S-methyl-5-thio-alpha-D-ribose 1-phosphate from S-methyl-5'-thioadenosine (hydrolase route): step 1/2. Its function is as follows. Catalyzes the irreversible cleavage of the glycosidic bond in both 5'-methylthioadenosine (MTA) and S-adenosylhomocysteine (SAH/AdoHcy) to adenine and the corresponding thioribose, 5'-methylthioribose and S-ribosylhomocysteine, respectively. Also cleaves 5'-deoxyadenosine, a toxic by-product of radical S-adenosylmethionine (SAM) enzymes, into 5-deoxyribose and adenine. This is 5'-methylthioadenosine/S-adenosylhomocysteine nucleosidase from Photobacterium profundum (strain SS9).